The following is a 661-amino-acid chain: UvrABC system protein B (661 aa).

The 158-residue stretch at 25-182 folds into the Helicase ATP-binding domain; sequence AGLNSKKRSQ…NDLINLQYKR (158 aa). ATP is bound at residue 38 to 45; sequence GITGSGKT. A Beta-hairpin motif is present at residues 91 to 114; it reads YYDYYQPEAYIARTDTFIEKDSSI. The Helicase C-terminal domain occupies 430–592; the sequence is QVEDLISEIQ…IIPKTINRAI (163 aa). Residues 621–656 enclose the UVR domain; that stretch reads KANINKLNKEMLKAASNLEFEQAAKLRDQLKTLEAA.

Belongs to the UvrB family. As to quaternary structure, forms a heterotetramer with UvrA during the search for lesions. Interacts with UvrC in an incision complex.

Its subcellular location is the cytoplasm. Its function is as follows. The UvrABC repair system catalyzes the recognition and processing of DNA lesions. A damage recognition complex composed of 2 UvrA and 2 UvrB subunits scans DNA for abnormalities. Upon binding of the UvrA(2)B(2) complex to a putative damaged site, the DNA wraps around one UvrB monomer. DNA wrap is dependent on ATP binding by UvrB and probably causes local melting of the DNA helix, facilitating insertion of UvrB beta-hairpin between the DNA strands. Then UvrB probes one DNA strand for the presence of a lesion. If a lesion is found the UvrA subunits dissociate and the UvrB-DNA preincision complex is formed. This complex is subsequently bound by UvrC and the second UvrB is released. If no lesion is found, the DNA wraps around the other UvrB subunit that will check the other stand for damage. This chain is UvrABC system protein B, found in Rickettsia akari (strain Hartford).